A 275-amino-acid polypeptide reads, in one-letter code: Putative ABC transporter permease protein ORF2 (275 aa).

The next 6 helical transmembrane spans lie at 11 to 31 (YFIF…FMLF), 74 to 94 (IAVS…AFAF), 108 to 128 (LIIA…YVLT), 136 to 156 (TVFA…IFIL), 185 to 205 (ILLP…GTYL), and 239 to 259 (IPAI…AYIF). The 192-residue stretch at 69–260 (LKNSVIAVSI…LPMLIAYIFG (192 aa)) folds into the ABC transmembrane type-1 domain.

The protein belongs to the binding-protein-dependent transport system permease family. MalFG subfamily.

The protein localises to the cell membrane. The polypeptide is Putative ABC transporter permease protein ORF2 (Caldicellulosiruptor sp. (strain Rt8B.4)).